Here is a 143-residue protein sequence, read N- to C-terminus: General odorant-binding protein 28a (143 aa).

Residues M1–A21 form the signal peptide. Disulfide bonds link C38–C69, C65–C123, and C113–C132.

In terms of tissue distribution, expressed in antenna, mostly on the medial and posterior surface of the third antennal segment.

The protein resides in the secreted. In Drosophila melanogaster (Fruit fly), this protein is General odorant-binding protein 28a (Obp28a).